We begin with the raw amino-acid sequence, 268 residues long: Protein MSS18 (268 aa).

This sequence to baculovirus occlusion-derived virus envelope protein E27 (ODV-E27).

The protein localises to the mitochondrion. Functionally, involved in splicing of intron aI5-beta of the mitochondrial COX1 transcript. This Saccharomyces cerevisiae (strain ATCC 204508 / S288c) (Baker's yeast) protein is Protein MSS18 (MSS18).